A 583-amino-acid polypeptide reads, in one-letter code: Ras-specific guanine nucleotide-releasing factor RalGPS2 (583 aa).

The Ras-GEF domain maps to 49–287 (TPEEYAGQIT…YKLSLKIEPG (239 aa)). A disordered region spans residues 283 to 314 (KIEPGTSTPRSAASREDLVGPEVGASPQSGRK). 4 positions are modified to phosphoserine: Ser293, Ser296, Ser308, and Ser311. The PXXP motif lies at 324–327 (PQTP). Thr326 carries the post-translational modification Phosphothreonine. A phosphoserine mark is found at Ser329 and Ser343. Position 361 is a phosphothreonine (Thr361). Positions 372 to 406 (DDSVMEPHAPSRGQAESSTLSSGISIGSSDGSELS) are disordered. Ser374 carries the phosphoserine modification. Positions 387–403 (ESSTLSSGISIGSSDGS) are enriched in low complexity. Ser422 bears the Phosphoserine mark. The region spanning 457–569 (AVTIQGVLRR…WFKHLSAACQ (113 aa)) is the PH domain. Residues 459–583 (TIQGVLRRKT…QVPTNLMTFE (125 aa)) form a required for stimulation of nucleotide exchange by RALA region.

As to quaternary structure, interacts with the SH3 domains of GRB2 and PLCG1. Interacts with RALA.

It is found in the cytoplasm. Its subcellular location is the cell membrane. In terms of biological role, guanine nucleotide exchange factor for the small GTPase RALA. May be involved in cytoskeletal organization. May also be involved in the stimulation of transcription in a Ras-independent fashion. This Homo sapiens (Human) protein is Ras-specific guanine nucleotide-releasing factor RalGPS2 (RALGPS2).